Here is a 1045-residue protein sequence, read N- to C-terminus: Suppression of tumorigenicity 18 protein (1045 aa).

Disordered regions lie at residues 38–90 (KKRR…NDHA), 158–228 (KAES…YNRK), and 340–364 (PRVT…RREA). The segment covering 52–63 (NKRKSLLMKPRH) has biased composition (basic residues). 2 stretches are compositionally biased toward basic and acidic residues: residues 69 to 90 (GCKE…NDHA) and 159 to 177 (AESD…NGRD). 6 consecutive CCHHC-type zinc fingers follow at residues 357 to 400 (PRPE…PLEI), 401 to 444 (LAMH…KLAM), 713 to 756 (RDLK…LKSL), 757 to 800 (MAAN…GIKM), 805 to 848 (EEKE…QKEN), and 858 to 901 (KLNK…IKKV). Zn(2+) is bound by residues cysteine 366, cysteine 371, histidine 384, cysteine 390, cysteine 410, cysteine 415, histidine 428, cysteine 434, cysteine 722, cysteine 727, histidine 740, cysteine 746, cysteine 766, cysteine 771, histidine 784, cysteine 790, cysteine 814, cysteine 819, histidine 832, cysteine 838, cysteine 867, cysteine 872, histidine 885, and cysteine 891. The stretch at 918-987 (IDGDEEIRHL…KELAGLSQAL (70 aa)) forms a coiled coil.

Belongs to the MYT1 family.

Its subcellular location is the nucleus. Repressor that binds to DNA sequences containing a bipartite element consisting of a direct repeat of the sequence 5'-AAAGTTT-3' separated by 2-9 nucleotides. Represses basal transcription activity from target promoters. The polypeptide is Suppression of tumorigenicity 18 protein (St18) (Mus musculus (Mouse)).